The sequence spans 341 residues: Malate dehydrogenase 1, mitochondrial (341 aa).

The N-terminal 22 residues, 1 to 22 (MFRSMLVRSSASAKQAVIRRSF), are a transit peptide targeting the mitochondrion. Residues 36-42 (GAAGGIG) and aspartate 62 contribute to the NAD(+) site. Substrate contacts are provided by arginine 109 and arginine 115. NAD(+) contacts are provided by residues asparagine 122 and 145–147 (ISN). Asparagine 147 and arginine 181 together coordinate substrate. The active-site Proton acceptor is histidine 205. Position 256 (methionine 256) interacts with NAD(+).

This sequence belongs to the LDH/MDH superfamily. MDH type 1 family. In terms of assembly, homodimer. In terms of processing, forms intramolecular disulfide bonds. Expressed in rosette leaves.

Its subcellular location is the mitochondrion matrix. It carries out the reaction (S)-malate + NAD(+) = oxaloacetate + NADH + H(+). With respect to regulation, negatively regulated by ATP. Not redox-regulated. The formation of intramolecular disulfide bonds does not alter enzymatic activity. Its function is as follows. Catalyzes a reversible NAD-dependent dehydrogenase reaction involved in central metabolism and redox homeostasis between organelle compartments. Required for carbon dioxide and energy partitioning in leaves. May limit photorespiration during the dark phase. Its activity is essential to shuttle reductants out from the mitochondria to support the photorespiratory flux. Can convert 2-oxoglutarate to (S)-2-hydroxyglutarate in vitro. The chain is Malate dehydrogenase 1, mitochondrial from Arabidopsis thaliana (Mouse-ear cress).